Consider the following 426-residue polypeptide: Serine--tRNA ligase (426 aa).

229 to 231 (TAE) is an L-serine binding site. ATP is bound by residues 260–262 (RTE) and valine 276. Glutamate 283 is an L-serine binding site. 350-353 (EVTS) is a binding site for ATP. Threonine 386 contributes to the L-serine binding site.

The protein belongs to the class-II aminoacyl-tRNA synthetase family. Type-1 seryl-tRNA synthetase subfamily. As to quaternary structure, homodimer. The tRNA molecule binds across the dimer.

It is found in the cytoplasm. It catalyses the reaction tRNA(Ser) + L-serine + ATP = L-seryl-tRNA(Ser) + AMP + diphosphate + H(+). The catalysed reaction is tRNA(Sec) + L-serine + ATP = L-seryl-tRNA(Sec) + AMP + diphosphate + H(+). Its pathway is aminoacyl-tRNA biosynthesis; selenocysteinyl-tRNA(Sec) biosynthesis; L-seryl-tRNA(Sec) from L-serine and tRNA(Sec): step 1/1. Catalyzes the attachment of serine to tRNA(Ser). Is also able to aminoacylate tRNA(Sec) with serine, to form the misacylated tRNA L-seryl-tRNA(Sec), which will be further converted into selenocysteinyl-tRNA(Sec). The polypeptide is Serine--tRNA ligase (Rhodopirellula baltica (strain DSM 10527 / NCIMB 13988 / SH1)).